The primary structure comprises 183 residues: Cell division protein ZapC (183 aa).

Belongs to the ZapC family. Interacts directly with FtsZ.

The protein localises to the cytoplasm. In terms of biological role, contributes to the efficiency of the cell division process by stabilizing the polymeric form of the cell division protein FtsZ. Acts by promoting interactions between FtsZ protofilaments and suppressing the GTPase activity of FtsZ. This Proteus mirabilis (strain HI4320) protein is Cell division protein ZapC.